Reading from the N-terminus, the 368-residue chain is Protein mab-21-like 3 (368 aa).

This sequence belongs to the mab-21 family.

This chain is Protein mab-21-like 3 (mab21L3), found in Xenopus laevis (African clawed frog).